Here is a 388-residue protein sequence, read N- to C-terminus: Cytochrome b (388 aa).

4 consecutive transmembrane segments (helical) span residues 32 to 52 (FGSLLGFCLVIQIVTGVTLAM), 76 to 98 (WLIRYLHSNTASAFFFLVYLHVG), 113 to 133 (TWTIGTIILVLMMATAFLGYV), and 179 to 199 (FFALHFVLPFVLAALVLMHLI). Residues H82 and H96 each coordinate heme b. Heme b-binding residues include H183 and H197. H202 contacts a ubiquinone. 4 helical membrane-spanning segments follow: residues 226 to 246 (FIFKDLITIFLFIIVLSIFIF), 290 to 310 (LLGVIAMFSAILIIMIMPITD), 322 to 342 (LSKITFYIFVANFLVLMQLGA), and 349 to 369 (FIEFGQISTVLYFSHFLIIVP).

It belongs to the cytochrome b family. Fungal cytochrome b-c1 complex contains 10 subunits; 3 respiratory subunits, 2 core proteins and 5 low-molecular weight proteins. Cytochrome b-c1 complex is a homodimer. Requires heme b as cofactor.

It is found in the mitochondrion inner membrane. In terms of biological role, component of the ubiquinol-cytochrome c reductase complex (complex III or cytochrome b-c1 complex) that is part of the mitochondrial respiratory chain. The b-c1 complex mediates electron transfer from ubiquinol to cytochrome c. Contributes to the generation of a proton gradient across the mitochondrial membrane that is then used for ATP synthesis. This chain is Cytochrome b (cob), found in Zymoseptoria tritici (Speckled leaf blotch fungus).